The following is a 739-amino-acid chain: MPRSEADTIRILVSTDNHVGYAERHPVRKDDSWRTFDEIMQIAKKQDVDMVLLGGDLFHENKPSRKSMYQVMRSLRKHCLGMKPCELEFLSDAAEVFEGAFPFVNYEDPDINVAIPVFSIHGNHDDPSGDGHYCSLDLLQAAGLVNYFGRVPEADNIHVKPILLQKGRTKMALYGLSNVRDERMHRTFRDNKVRFYRPNQQKNDWFNLLALHQNHYAHTRTSYVAENMLPDFMDLVIWGHEHECLIDPVRNPETGFHVMQPGSSVATSLVPGEAVPKHVAILNITGRKFEVDKIPLKTVRPFVTREIVLASDKRFKGLDKQNNRHEITKRLMVIVNEMIEEANAEWRAVHAEDDDMDEDMEPPLPLVRLKVDYTAPDGARYEVENPHRFSNRFTGKVANHNDVVRFHCNTKGKKNVATAPGVREDIAEILESADTIKVDNLVQEFFAQQSLKILPQAPFSDAVNQFVSKDDKHAVEMFVIESLSTQVKELLQLDDDKIVDLDAHIQDFRQVMEKSFDAGQHKQAQRTKRFKRKPDGWDSDLDGHWINQPQALEDIPAEVEPKGNDRPTKRVPTSGVTFSDEDEDMDMDNQPVPIRAAPKRGAAAKTTAAAKKAAPGKKAAPAKKAAPAKKAAPAKKAPARGRKKKTPFVDSDEEEEEDYPEDDDEEEEEADEEEEDVIMEDDEEDPPAPPPKPKATSRVASTRASARATPVRATPARATQARLRLRRPPKPGLLARRLG.

Mn(2+) is bound by residues Asp-16, His-18, Asp-56, and Asn-123. His-124 serves as the catalytic Proton donor. Mn(2+) contacts are provided by His-212, His-240, and His-242. Residues 516–739 are disordered; it reads FDAGQHKQAQ…KPGLLARRLG (224 aa). Residues 523–532 show a composition bias toward basic residues; it reads QAQRTKRFKR. The segment covering 559-568 has biased composition (basic and acidic residues); sequence VEPKGNDRPT. Over residues 599 to 636 the composition is skewed to low complexity; the sequence is KRGAAAKTTAAAKKAAPGKKAAPAKKAAPAKKAAPAKK. A compositionally biased stretch (basic residues) spans 637–646; sequence APARGRKKKT. The span at 650–686 shows a compositional bias: acidic residues; sequence DSDEEEEEDYPEDDDEEEEEADEEEEDVIMEDDEEDP. The segment covering 694–722 has biased composition (low complexity); the sequence is KATSRVASTRASARATPVRATPARATQAR.

This sequence belongs to the MRE11/RAD32 family. As to quaternary structure, component of the MRN complex composed of two heterodimers RAD50 and MRE11 associated with a single NBS1. Mn(2+) is required as a cofactor.

The protein resides in the nucleus. The protein localises to the chromosome. It localises to the telomere. Core component of the MRN complex, which plays a central role in double-strand break (DSB) repair, DNA recombination, maintenance of telomere integrity and meiosis. The MRN complex is involved in the repair of DNA double-strand breaks (DSBs) via homologous recombination (HR), an error-free mechanism which primarily occurs during S and G2 phases. The complex (1) mediates the end resection of damaged DNA, which generates proper single-stranded DNA, a key initial steps in HR, and is (2) required for the recruitment of other repair factors and efficient activation of ATM and ATR upon DNA damage. Within the MRN complex, MRE11 possesses both single-strand endonuclease activity and double-strand-specific 3'-5' exonuclease activity. MRE11 first endonucleolytically cleaves the 5' strand at DNA DSB ends to prevent non-homologous end joining (NHEJ) and licence HR. It then generates a single-stranded DNA gap via 3' to 5' exonucleolytic degradation, which is required for single-strand invasion and recombination. The MRN complex is also required for the processing of R-loops. The polypeptide is Double-strand break repair protein mus-23 (mus-23) (Neurospora crassa (strain ATCC 24698 / 74-OR23-1A / CBS 708.71 / DSM 1257 / FGSC 987)).